Consider the following 307-residue polypeptide: Cytochrome f (307 aa).

Residues 1–24 form the signal peptide; the sequence is MKKNLFLVSVFASLFVGTANNALA. Heme is bound by residues Tyr25, Cys45, Cys48, and His49. A helical transmembrane segment spans residues 273–293; the sequence is LQGLVIFLGFVLIAQVFLVLK.

Belongs to the cytochrome f family. As to quaternary structure, the 4 large subunits of the cytochrome b6-f complex are cytochrome b6, subunit IV (17 kDa polypeptide, petD), cytochrome f and the Rieske protein, while the 4 small subunits are PetG, PetL, PetM and PetN. The complex functions as a dimer. Heme is required as a cofactor.

The protein resides in the plastid. The protein localises to the chloroplast thylakoid membrane. In terms of biological role, component of the cytochrome b6-f complex, which mediates electron transfer between photosystem II (PSII) and photosystem I (PSI), cyclic electron flow around PSI, and state transitions. This chain is Cytochrome f, found in Ostreococcus tauri.